The primary structure comprises 256 residues: Biosynthetic peptidoglycan transglycosylase (256 aa).

A helical transmembrane segment spans residues 26 to 48 (VARWLAYAGGVFAGAWLATQLYY).

The protein belongs to the glycosyltransferase 51 family.

The protein resides in the cell inner membrane. The catalysed reaction is [GlcNAc-(1-&gt;4)-Mur2Ac(oyl-L-Ala-gamma-D-Glu-L-Lys-D-Ala-D-Ala)](n)-di-trans,octa-cis-undecaprenyl diphosphate + beta-D-GlcNAc-(1-&gt;4)-Mur2Ac(oyl-L-Ala-gamma-D-Glu-L-Lys-D-Ala-D-Ala)-di-trans,octa-cis-undecaprenyl diphosphate = [GlcNAc-(1-&gt;4)-Mur2Ac(oyl-L-Ala-gamma-D-Glu-L-Lys-D-Ala-D-Ala)](n+1)-di-trans,octa-cis-undecaprenyl diphosphate + di-trans,octa-cis-undecaprenyl diphosphate + H(+). It functions in the pathway cell wall biogenesis; peptidoglycan biosynthesis. In terms of biological role, peptidoglycan polymerase that catalyzes glycan chain elongation from lipid-linked precursors. The chain is Biosynthetic peptidoglycan transglycosylase from Burkholderia thailandensis (strain ATCC 700388 / DSM 13276 / CCUG 48851 / CIP 106301 / E264).